Here is a 158-residue protein sequence, read N- to C-terminus: Salt stress-responsive protein YocM (158 aa).

Residues 51 to 158 (GKGDASFPSM…GQAKTIVIDD (108 aa)) form the sHSP domain.

It belongs to the small heat shock protein (HSP20) family. Forms homodimers, homotetramers and higher oligomers.

The protein localises to the cytoplasm. Functionally, part of the cellular protein quality control system with a specific role in salt stress response. May facilitate protein homeostasis, together with chemical chaperones that accumulate during the salt stress response. Increased levels of YocM protects against both heat and salt stress. In vitro, displays an unusual aggregase chaperone activity. In Bacillus subtilis (strain 168), this protein is Salt stress-responsive protein YocM (yocM).